A 149-amino-acid chain; its full sequence is Secreted RxLR effector protein 17 (149 aa).

A signal peptide spans 1-24 (MRLFYFSAMSVIGLLARNNMVVVA). Residues 52–78 (RSLRTREKDIQDSTVAKDDAIKVEEDR) carry the RxLR-dEER motif.

Belongs to the RxLR effector family.

It localises to the secreted. The protein localises to the host cytoplasm. The protein resides in the host nucleus. Its function is as follows. Effector that acts as a broad suppressor of cell death to interrupt plant immunity. Inhibits cell death induced by cell death-inducing proteins, including the PAMP elicitor INF1 from P.infestans. In Plasmopara viticola (Downy mildew of grapevine), this protein is Secreted RxLR effector protein 17.